The chain runs to 112 residues: Large ribosomal subunit protein mL53 (112 aa).

The protein belongs to the mitochondrion-specific ribosomal protein mL53 family. As to quaternary structure, component of the mitochondrial ribosome large subunit (39S) which comprises a 16S rRNA and about 50 distinct proteins.

It localises to the mitochondrion. The polypeptide is Large ribosomal subunit protein mL53 (MRPL53) (Bos taurus (Bovine)).